Reading from the N-terminus, the 182-residue chain is MGLAFGKLFSRFFGKKDMRILMVGLDAAGKTTILYKLKLGEIVTTIPTIGFNVETVEFKNINFTVWDVGGQDKIRPLWRHYFQNTQGLIFVVDSNDRERIQEACDELTKMLNEDELRDAVLLVFCNKQDLPNAMSVAEVTDKLNLHSLRSRKWYIQSTCATSGDGLYEGLDWLSNTLTSSSK.

The N-myristoyl glycine moiety is linked to residue glycine 2. Residues 24-31 (GLDAAGKT), 67-71 (DVGGQ), and 126-129 (NKQD) each bind GTP.

The protein belongs to the small GTPase superfamily. Arf family.

The protein resides in the golgi apparatus. It catalyses the reaction GTP + H2O = GDP + phosphate + H(+). Its function is as follows. GTP-binding protein involved in protein trafficking; may modulate vesicle budding and uncoating within the Golgi apparatus. The polypeptide is ADP-ribosylation factor 1 (arfA) (Dictyostelium discoideum (Social amoeba)).